The chain runs to 62 residues: Paralithocin 1 (62 aa).

A signal peptide spans 1 to 23 (MGPMKVLLVLLVVMVAAPHIADA). 4 disulfides stabilise this stretch: Cys-29–Cys-55, Cys-33–Cys-51, Cys-37–Cys-49, and Cys-42–Cys-52. A Tyrosine amide; partial modification is found at Tyr-61.

This sequence belongs to the paralithocin family. The amidated form is probably the active form.

Has weak antibacterial activity, mainly against marine Gram-positive bacteria like C.maltaromaticum (MIC=200 uM), C.mobile (MIC=100 uM), C.divergens (MIC=200 uM) and C.funditum (MIC=200 uM) but also against C.glutamicum (MIC=50 uM). Has very little or no activity against Gram-negative bacteria. This chain is Paralithocin 1, found in Paralithodes camtschaticus (Red king crab).